Consider the following 494-residue polypeptide: Alpha-amylase 2 (494 aa).

The signal sequence occupies residues 1–18 (MFLAKSIVCLALLAVANA). The cysteines at positions 46 and 102 are disulfide-linked. Asn-116, Arg-165, and Asp-174 together coordinate Ca(2+). A disulfide bond links Cys-153 and Cys-167. Residue Arg-202 participates in chloride binding. Asp-204 (nucleophile) is an active-site residue. His-208 contributes to the Ca(2+) binding site. The active-site Proton donor is the Glu-241. Residues Asn-304 and Arg-343 each contribute to the chloride site. The disordered stretch occupies residues 350 to 370 (FTDTDQGPPTTDGQNIASPSF). A compositionally biased stretch (low complexity) spans 351 to 363 (TDTDQGPPTTDGQ). 2 disulfides stabilise this stretch: Cys-376–Cys-382 and Cys-448–Cys-460.

Belongs to the glycosyl hydrolase 13 family. As to quaternary structure, monomer. Requires Ca(2+) as cofactor. Chloride is required as a cofactor.

It catalyses the reaction Endohydrolysis of (1-&gt;4)-alpha-D-glucosidic linkages in polysaccharides containing three or more (1-&gt;4)-alpha-linked D-glucose units.. This Drosophila ananassae (Fruit fly) protein is Alpha-amylase 2 (Amy58).